Here is a 168-residue protein sequence, read N- to C-terminus: Photosystem I assembly protein Ycf3 (168 aa).

TPR repeat units follow at residues 35-68 (AFTYYRDGISAQSEGNYAEALQNYYEAMRLEIDP), 72-105 (SYILYNIGLIHTSNGEHTKALEYYFRALERNSFL), and 120-153 (GEQAIRQGDSEIAEAWFDQAAEYWKQAIALTPGN).

Belongs to the Ycf3 family.

The protein localises to the plastid. Its subcellular location is the chloroplast thylakoid membrane. In terms of biological role, essential for the assembly of the photosystem I (PSI) complex. May act as a chaperone-like factor to guide the assembly of the PSI subunits. In Jasminum nudiflorum (Winter jasmine), this protein is Photosystem I assembly protein Ycf3.